Here is a 788-residue protein sequence, read N- to C-terminus: E3 ubiquitin-protein ligase SspH2 (788 aa).

The segment at 1–481 (MPFHIGSGCL…PGYSGPIIRF (481 aa)) is interaction with host membrane and with target proteins. LRR repeat units lie at residues 223–242 (HITT…ALPP), 243–264 (ELRT…PPGL), 265–282 (LELS…ALPS), 283–302 (GLCK…VLPP), 303–324 (GLQE…PSEL), 325–342 (CKLW…MLPS), 343–364 (GLQE…PSEL), 365–382 (YKLW…ALPS), 383–404 (GLKE…PSEL), 405–422 (KELM…MLPS), 423–445 (GLLS…IHLS), and 446–466 (SETT…QALR). The segment at 482 to 491 (DMAGASAPRE) is linker. The interval 492 to 788 (TRALHLAAAD…SYLNVQWRRN (297 aa)) is E3 ubiquitin-protein ligase catalytic domain. An NEL domain is found at 494-788 (ALHLAAADWL…SYLNVQWRRN (295 aa)). Cysteine 580 acts as the Glycyl thioester intermediate in catalysis.

It belongs to the LRR-containing bacterial E3 ligase family. In terms of processing, ubiquitinated in the presence of host E1 ubiquitin-activating enzyme UBA1, E2 ubiquitin-conjugating enzyme UBE2D2 and ubiquitin.

It is found in the secreted. Its subcellular location is the host cytoplasm. The protein localises to the host apical cell membrane. The enzyme catalyses S-ubiquitinyl-[E2 ubiquitin-conjugating enzyme]-L-cysteine + [acceptor protein]-L-lysine = [E2 ubiquitin-conjugating enzyme]-L-cysteine + N(6)-ubiquitinyl-[acceptor protein]-L-lysine.. Its activity is regulated as follows. Exists in an autoinhibited state in the absence of substrate protein, due to interactions of the leucine-rich repeat domain with the catalytic domain. Is activated upon binding to a substrate protein. Functionally, effector proteins function to alter host cell physiology and promote bacterial survival in host tissues. This protein is an E3 ubiquitin ligase that interferes with host's ubiquitination pathway. This chain is E3 ubiquitin-protein ligase SspH2 (sspH2), found in Salmonella typhimurium (strain LT2 / SGSC1412 / ATCC 700720).